We begin with the raw amino-acid sequence, 376 residues long: Multiphosphoryl transfer protein (376 aa).

One can recognise a PTS EIIA type-2 domain in the interval 2-142 (FQLSVQDIHP…EELRALLMGE (141 aa)). Histidine 62 (tele-phosphohistidine intermediate; for EIIA activity) is an active-site residue. Histidine 62 carries the post-translational modification Phosphohistidine; by HPr. Positions 156 to 284 (TLDIVASDLL…LTSDDAPTDD (129 aa)) are m domain. In terms of domain architecture, HPr spans 285 to 375 (VLSAEFVVRN…DAIAAGLGEG (91 aa)). The Pros-phosphohistidine intermediate; for HPr activity role is filled by histidine 299. Position 299 is a phosphohistidine; by EI (histidine 299).

Its subcellular location is the cytoplasm. The phosphoenolpyruvate-dependent sugar phosphotransferase system (sugar PTS), a major carbohydrate active transport system, catalyzes the phosphorylation of incoming sugar substrates concomitantly with their translocation across the cell membrane. The enzyme II FruAB PTS system is involved in fructose transport. The chain is Multiphosphoryl transfer protein from Escherichia coli O157:H7.